A 238-amino-acid chain; its full sequence is Ribosomal RNA large subunit methyltransferase E (238 aa).

Residues glycine 76, tryptophan 78, aspartate 99, aspartate 115, and aspartate 139 each contribute to the S-adenosyl-L-methionine site. The active-site Proton acceptor is the lysine 179.

This sequence belongs to the class I-like SAM-binding methyltransferase superfamily. RNA methyltransferase RlmE family.

The protein localises to the cytoplasm. The catalysed reaction is uridine(2552) in 23S rRNA + S-adenosyl-L-methionine = 2'-O-methyluridine(2552) in 23S rRNA + S-adenosyl-L-homocysteine + H(+). Its function is as follows. Specifically methylates the uridine in position 2552 of 23S rRNA at the 2'-O position of the ribose in the fully assembled 50S ribosomal subunit. This is Ribosomal RNA large subunit methyltransferase E from Rhodopseudomonas palustris (strain BisB18).